Here is a 159-residue protein sequence, read N- to C-terminus: Phosphopantetheine adenylyltransferase (159 aa).

Residue threonine 9 participates in substrate binding. ATP contacts are provided by residues 9–10 and histidine 17; that span reads TF. Residues lysine 41, leucine 73, and arginine 87 each coordinate substrate. ATP contacts are provided by residues 88–90, glutamate 98, and 123–129; these read GLR and YSFISST.

Belongs to the bacterial CoaD family. Homohexamer. Requires Mg(2+) as cofactor.

The protein resides in the cytoplasm. It catalyses the reaction (R)-4'-phosphopantetheine + ATP + H(+) = 3'-dephospho-CoA + diphosphate. The protein operates within cofactor biosynthesis; coenzyme A biosynthesis; CoA from (R)-pantothenate: step 4/5. In terms of biological role, reversibly transfers an adenylyl group from ATP to 4'-phosphopantetheine, yielding dephospho-CoA (dPCoA) and pyrophosphate. This is Phosphopantetheine adenylyltransferase from Pseudomonas putida (strain ATCC 700007 / DSM 6899 / JCM 31910 / BCRC 17059 / LMG 24140 / F1).